A 248-amino-acid polypeptide reads, in one-letter code: tRNA (guanine-N(1)-)-methyltransferase (248 aa).

S-adenosyl-L-methionine-binding positions include Gly113 and 133–138; that span reads IGDFVL.

It belongs to the RNA methyltransferase TrmD family. Homodimer.

The protein resides in the cytoplasm. It catalyses the reaction guanosine(37) in tRNA + S-adenosyl-L-methionine = N(1)-methylguanosine(37) in tRNA + S-adenosyl-L-homocysteine + H(+). Its function is as follows. Specifically methylates guanosine-37 in various tRNAs. The sequence is that of tRNA (guanine-N(1)-)-methyltransferase from Dehalococcoides mccartyi (strain CBDB1).